The primary structure comprises 397 residues: Tryptophan synthase beta chain (397 aa).

K87 is modified (N6-(pyridoxal phosphate)lysine).

This sequence belongs to the TrpB family. In terms of assembly, tetramer of two alpha and two beta chains. It depends on pyridoxal 5'-phosphate as a cofactor.

The enzyme catalyses (1S,2R)-1-C-(indol-3-yl)glycerol 3-phosphate + L-serine = D-glyceraldehyde 3-phosphate + L-tryptophan + H2O. Its pathway is amino-acid biosynthesis; L-tryptophan biosynthesis; L-tryptophan from chorismate: step 5/5. In terms of biological role, the beta subunit is responsible for the synthesis of L-tryptophan from indole and L-serine. The protein is Tryptophan synthase beta chain of Citrobacter koseri (strain ATCC BAA-895 / CDC 4225-83 / SGSC4696).